The chain runs to 186 residues: Nicotinamidase/pyrazinamidase (186 aa).

The active-site Proton acceptor is Asp8. Positions 49, 51, 57, and 71 each coordinate Fe cation. The active site involves Lys96. The active-site Nucleophile is Cys138.

The protein belongs to the isochorismatase family. In terms of assembly, monomer. It depends on Mn(2+) as a cofactor. The cofactor is Fe(2+).

The enzyme catalyses nicotinamide + H2O = nicotinate + NH4(+). It carries out the reaction pyrazinamide + H2O = pyrazine-2-carboxylate + NH4(+). The protein operates within cofactor biosynthesis; nicotinate biosynthesis; nicotinate from nicotinamide: step 1/1. Its activity is regulated as follows. Is inhibited by Cu(2+), Zn(2+) and Fe(3+). In terms of biological role, catalyzes the deamidation of nicotinamide (NAM) into nicotinate. Likely functions in the cyclical salvage pathway for production of NAD from nicotinamide. Is involved in the activation of the first-line antituberculous drug pyrazinamide (PZA) by converting it into the active form, pyrazinoic acid. The polypeptide is Nicotinamidase/pyrazinamidase (Mycobacterium tuberculosis (strain ATCC 25618 / H37Rv)).